The chain runs to 293 residues: MSIQDFKDVNIITAFITPFKEDGSINFAALPKLIEHLLAHHTQGLLLAGTTAESPTLTHDEELELFAAVQKIVNGRVPLIAGVGTNDTRDSVNFVKEVADFGGFSAGLAIVPYYNKPTQEGLYQHFMTLADASDLPIIIYNIPGRVVTTLETDTMLRLAQHPNIIGVKECTNLDNIAYLVDNKPDDFLIFTGEDGEAFHALSLGADGVISVASHTNGDELFAMVEAIEKSDIKKAAGIQRQFLPKVHALFSVASPAPVKAVLNHQGFDAGPLRLPLVACTDEEARRIIEIVEK.

Thr-51 is a binding site for pyruvate. Tyr-140 acts as the Proton donor/acceptor in catalysis. Lys-168 acts as the Schiff-base intermediate with substrate in catalysis. Pyruvate is bound at residue Ile-209.

The protein belongs to the DapA family. Homotetramer; dimer of dimers.

It localises to the cytoplasm. The enzyme catalyses L-aspartate 4-semialdehyde + pyruvate = (2S,4S)-4-hydroxy-2,3,4,5-tetrahydrodipicolinate + H2O + H(+). It participates in amino-acid biosynthesis; L-lysine biosynthesis via DAP pathway; (S)-tetrahydrodipicolinate from L-aspartate: step 3/4. In terms of biological role, catalyzes the condensation of (S)-aspartate-beta-semialdehyde [(S)-ASA] and pyruvate to 4-hydroxy-tetrahydrodipicolinate (HTPA). This Streptococcus mutans serotype c (strain ATCC 700610 / UA159) protein is 4-hydroxy-tetrahydrodipicolinate synthase.